Consider the following 176-residue polypeptide: O-acetyl-ADP-ribose deacetylase (176 aa).

A Macro domain is found at 1–175; that stretch reads MSGRINVVQG…LYQRLLGQYD (175 aa). Residues 11–12, N25, 33–35, and 122–126 each bind substrate; these read DI, GVD, and STGIY. D35 (proton acceptor) is an active-site residue.

Belongs to the MacroD-type family. YmdB subfamily. Homodimer. Interacts with RNase III.

The catalysed reaction is 3''-O-acetyl-ADP-D-ribose + H2O = ADP-D-ribose + acetate + H(+). The enzyme catalyses 2''-O-acetyl-ADP-D-ribose + H2O = ADP-D-ribose + acetate + H(+). Its function is as follows. Deacetylates O-acetyl-ADP ribose to yield ADP-ribose and free acetate. Down-regulates ribonuclease 3 (RNase III) activity. Acts by interacting directly with the region of the ribonuclease that is required for dimerization/activation. The chain is O-acetyl-ADP-ribose deacetylase from Cronobacter turicensis (strain DSM 18703 / CCUG 55852 / LMG 23827 / z3032).